The sequence spans 290 residues: Phosphatidylglycerol--prolipoprotein diacylglyceryl transferase (290 aa).

The next 7 membrane-spanning stretches (helical) occupy residues 21-41, 60-80, 96-116, 124-144, 199-219, 226-246, and 260-280; these read VSLH…MWLA, LLYA…VLFY, WDGG…MLWF, FFQV…AGRL, SQLY…NVFI, GSVS…VECF, and ISMG…MMIW. Arg143 is an a 1,2-diacyl-sn-glycero-3-phospho-(1'-sn-glycerol) binding site.

It belongs to the Lgt family.

It localises to the cell inner membrane. The enzyme catalyses L-cysteinyl-[prolipoprotein] + a 1,2-diacyl-sn-glycero-3-phospho-(1'-sn-glycerol) = an S-1,2-diacyl-sn-glyceryl-L-cysteinyl-[prolipoprotein] + sn-glycerol 1-phosphate + H(+). It participates in protein modification; lipoprotein biosynthesis (diacylglyceryl transfer). Catalyzes the transfer of the diacylglyceryl group from phosphatidylglycerol to the sulfhydryl group of the N-terminal cysteine of a prolipoprotein, the first step in the formation of mature lipoproteins. This Yersinia pseudotuberculosis serotype O:1b (strain IP 31758) protein is Phosphatidylglycerol--prolipoprotein diacylglyceryl transferase.